The following is a 1354-amino-acid chain: RNA-directed RNA polymerase VP1 (1354 aa).

It catalyses the reaction RNA(n) + a ribonucleoside 5'-triphosphate = RNA(n+1) + diphosphate. RNA-directed RNA polymerase that is involved in transcription and genome replication. Following infection, it catalyzes the synthesis of fully conservative plus strands. After core assembly, which consists in recruitment of one capped plus-strand for each genomic segments and polymerase complexes, the polymerase switches mode and catalyzes the synthesis of complementary minus-strands. This is RNA-directed RNA polymerase VP1 from Cryphonectria parasitica mycoreovirus 1 (strain 9B21) (CpMYRV-1).